Reading from the N-terminus, the 393-residue chain is Staphopain B (393 aa).

Positions 1 to 36 are cleaved as a signal peptide; the sequence is MNSSCKTRVFNIISIIMVSMLILSLGAFANNNKAKA. The propeptide occupies 37-219; that stretch reads DSHSKQLEIN…KVEENEAIQE (183 aa). Active-site residues include C243, H340, and N360.

This sequence belongs to the peptidase C47 family. As to quaternary structure, in the cytoplasm, prematurely activated/folded SspB forms a stable non-covalent complex with SspC. Post-translationally, proteolytically cleaved by staphylococcal serine protease (SspA).

It localises to the secreted. Prematurely activated/folded staphopain B is inhibited by staphostatin B (SspC), which is probably required to protect staphylococcal cytoplasmic proteins from degradation by SspB. Functionally, cysteine protease that plays an important role in the inhibition of host innate immune response. Degrades host elastin, fibrogen, fibronectin and kininogen. Blocks phagocytosis of opsonised S.aureus by neutrophils and monocytes by inducing their death in a proteolytic activity-dependent manner. Decreases surface expression of the 'don't eat me' signal CD31 on neutrophils. Cleaves host galectin-3/LGALS3, thereby inhibiting the neutrophil-activating ability of the lectin. The polypeptide is Staphopain B (sspB) (Staphylococcus aureus (strain MRSA252)).